The primary structure comprises 319 residues: tRNA-modifying protein YgfZ (319 aa).

Trp27 and Trp189 together coordinate folate.

It belongs to the tRNA-modifying YgfZ family.

It is found in the cytoplasm. Functionally, folate-binding protein involved in regulating the level of ATP-DnaA and in the modification of some tRNAs. It is probably a key factor in regulatory networks that act via tRNA modification, such as initiation of chromosomal replication. The sequence is that of tRNA-modifying protein YgfZ from Buchnera aphidicola subsp. Acyrthosiphon pisum (strain APS) (Acyrthosiphon pisum symbiotic bacterium).